A 337-amino-acid chain; its full sequence is Phosphoribosylformylglycinamidine cyclo-ligase (337 aa).

This sequence belongs to the AIR synthase family.

Its subcellular location is the cytoplasm. It catalyses the reaction 2-formamido-N(1)-(5-O-phospho-beta-D-ribosyl)acetamidine + ATP = 5-amino-1-(5-phospho-beta-D-ribosyl)imidazole + ADP + phosphate + H(+). It functions in the pathway purine metabolism; IMP biosynthesis via de novo pathway; 5-amino-1-(5-phospho-D-ribosyl)imidazole from N(2)-formyl-N(1)-(5-phospho-D-ribosyl)glycinamide: step 2/2. This is Phosphoribosylformylglycinamidine cyclo-ligase from Gloeobacter violaceus (strain ATCC 29082 / PCC 7421).